The following is a 1704-amino-acid chain: Vitellogenin-1 (1704 aa).

Residues 1-14 (MKAVVLALTLAFVA) form the signal peptide. Residues 22–660 (FAAGKTYVYK…DAATFMPKSF (639 aa)) form the Vitellogenin domain. 16 N-linked (GlcNAc...) asparagine glycosylation sites follow: Asn-446, Asn-635, Asn-903, Asn-908, Asn-1019, Asn-1054, Asn-1080, Asn-1121, Asn-1174, Asn-1285, Asn-1322, Asn-1375, Asn-1379, Asn-1405, Asn-1456, and Asn-1512. Residues 1078 to 1109 (RRNSSSSSSSSSSSSSESRSSRSSSSSSSSSR) are compositionally biased toward low complexity. The tract at residues 1078-1213 (RRNSSSSSSS…SSDRRSKEVM (136 aa)) is disordered. Residues 1122-1204 (SSSSSSSRRS…FSDSSSSSSS (83 aa)) are compositionally biased toward low complexity. Positions 1442 to 1617 (AECSFVEDTL…SWILPAESCR (176 aa)) constitute a VWFD domain. Disulfide bonds link Cys-1444–Cys-1580 and Cys-1467–Cys-1616.

Post-translationally, phosvitin, an egg yolk storage protein, is one of the most highly phosphorylated (10%) proteins in nature. The N-terminal of the blood vitellogenin is blocked. Produced by the liver, secreted into the blood and then sequestered by receptor mediated endocytosis into growing oocytes, where it is generally cleaved, giving rise to the respective yolk components composed of complex suite of small cleavage products.

Functionally, precursor of the major egg-yolk proteins that are sources of nutrients during early development of oviparous organisms. This Fundulus heteroclitus (Killifish) protein is Vitellogenin-1 (vtg1).